The chain runs to 353 residues: Photosystem II protein D1 (353 aa).

The residue at position 2 (threonine 2) is an N-acetylthreonine. A Phosphothreonine modification is found at threonine 2. The next 3 membrane-spanning stretches (helical) occupy residues 29 to 46 (YIGWFGVLMIPTLLTATS), 118 to 133 (HFLLGVACYMGREWEL), and 142 to 156 (WIAVAYSAPVAAATA). Position 118 (histidine 118) interacts with chlorophyll a. Tyrosine 126 is a pheophytin a binding site. 2 residues coordinate [CaMn4O5] cluster: aspartate 170 and glutamate 189. Residues 197-218 (FHMLGVAGVFGGSLFSAMHGSL) traverse the membrane as a helical segment. Histidine 198 serves as a coordination point for chlorophyll a. A quinone is bound by residues histidine 215 and 264-265 (SF). Histidine 215 lines the Fe cation pocket. A Fe cation-binding site is contributed by histidine 272. A helical transmembrane segment spans residues 274–288 (FLAAWPVVGIWFTAL). Residues histidine 332, glutamate 333, aspartate 342, and alanine 344 each coordinate [CaMn4O5] cluster. Residues 345-353 (AVEAPSING) constitute a propeptide that is removed on maturation.

It belongs to the reaction center PufL/M/PsbA/D family. As to quaternary structure, PSII is composed of 1 copy each of membrane proteins PsbA, PsbB, PsbC, PsbD, PsbE, PsbF, PsbH, PsbI, PsbJ, PsbK, PsbL, PsbM, PsbT, PsbX, PsbY, PsbZ, Psb30/Ycf12, at least 3 peripheral proteins of the oxygen-evolving complex and a large number of cofactors. It forms dimeric complexes. The D1/D2 heterodimer binds P680, chlorophylls that are the primary electron donor of PSII, and subsequent electron acceptors. It shares a non-heme iron and each subunit binds pheophytin, quinone, additional chlorophylls, carotenoids and lipids. D1 provides most of the ligands for the Mn4-Ca-O5 cluster of the oxygen-evolving complex (OEC). There is also a Cl(-1) ion associated with D1 and D2, which is required for oxygen evolution. The PSII complex binds additional chlorophylls, carotenoids and specific lipids. is required as a cofactor. In terms of processing, tyr-161 forms a radical intermediate that is referred to as redox-active TyrZ, YZ or Y-Z. C-terminally processed by CTPA; processing is essential to allow assembly of the oxygen-evolving complex and thus photosynthetic growth.

It localises to the plastid. The protein resides in the chloroplast thylakoid membrane. It catalyses the reaction 2 a plastoquinone + 4 hnu + 2 H2O = 2 a plastoquinol + O2. Photosystem II (PSII) is a light-driven water:plastoquinone oxidoreductase that uses light energy to abstract electrons from H(2)O, generating O(2) and a proton gradient subsequently used for ATP formation. It consists of a core antenna complex that captures photons, and an electron transfer chain that converts photonic excitation into a charge separation. The D1/D2 (PsbA/PsbD) reaction center heterodimer binds P680, the primary electron donor of PSII as well as several subsequent electron acceptors. The sequence is that of Photosystem II protein D1 from Chloranthus spicatus (Chulantree).